The sequence spans 52 residues: Large ribosomal subunit protein bL32c (52 aa).

Belongs to the bacterial ribosomal protein bL32 family.

Its subcellular location is the plastid. It localises to the chloroplast. The protein is Large ribosomal subunit protein bL32c of Arabis hirsuta (Hairy rock-cress).